We begin with the raw amino-acid sequence, 245 residues long: Orotidine 5'-phosphate decarboxylase (245 aa).

Substrate is bound by residues aspartate 22, lysine 44, 71–80 (DLKFHDIPNT), threonine 131, arginine 192, glutamine 201, glycine 221, and arginine 222. Lysine 73 acts as the Proton donor in catalysis.

Belongs to the OMP decarboxylase family. Type 1 subfamily. Homodimer.

It catalyses the reaction orotidine 5'-phosphate + H(+) = UMP + CO2. It participates in pyrimidine metabolism; UMP biosynthesis via de novo pathway; UMP from orotate: step 2/2. Catalyzes the decarboxylation of orotidine 5'-monophosphate (OMP) to uridine 5'-monophosphate (UMP). This is Orotidine 5'-phosphate decarboxylase from Yersinia pestis bv. Antiqua (strain Antiqua).